A 332-amino-acid polypeptide reads, in one-letter code: Tetraacyldisaccharide 4'-kinase (332 aa).

60 to 67 (TVGGTGKT) contributes to the ATP binding site.

The protein belongs to the LpxK family.

The enzyme catalyses a lipid A disaccharide + ATP = a lipid IVA + ADP + H(+). Its pathway is glycolipid biosynthesis; lipid IV(A) biosynthesis; lipid IV(A) from (3R)-3-hydroxytetradecanoyl-[acyl-carrier-protein] and UDP-N-acetyl-alpha-D-glucosamine: step 6/6. Transfers the gamma-phosphate of ATP to the 4'-position of a tetraacyldisaccharide 1-phosphate intermediate (termed DS-1-P) to form tetraacyldisaccharide 1,4'-bis-phosphate (lipid IVA). The protein is Tetraacyldisaccharide 4'-kinase of Pseudomonas paraeruginosa (strain DSM 24068 / PA7) (Pseudomonas aeruginosa (strain PA7)).